A 239-amino-acid polypeptide reads, in one-letter code: MVIKAQSPAGFAEEYIIESIWNNRFPPGSILPAERELSELIGVTRTTLREVLQRLARDGWLTIQHGKPTKVNNFWETSGLNILETLARLDHDSVPQLIDNLLAVRTNIATIFVRTAIRHHPEKAQEILARAKTVDDNAEAFTALDYGIFRGLAFASGNPIYGLILNGLKGLYTRVGRYYFSNPEARKLALTFYNKLSTLCDTESYDQVLECLRTYGKESGAIWHSMQGTMPSDLAEARR.

The HTH gntR-type domain maps to 6 to 74 (QSPAGFAEEY…HGKPTKVNNF (69 aa)). The segment at residues 34–53 (ERELSELIGVTRTTLREVLQ) is a DNA-binding region (H-T-H motif).

As to quaternary structure, homodimer.

The protein localises to the cytoplasm. Functionally, multifunctional regulator of fatty acid metabolism. This chain is Fatty acid metabolism regulator protein, found in Yersinia pseudotuberculosis serotype O:1b (strain IP 31758).